The following is a 556-amino-acid chain: 2-succinyl-5-enolpyruvyl-6-hydroxy-3-cyclohexene-1-carboxylate synthase (556 aa).

This sequence belongs to the TPP enzyme family. MenD subfamily. Homodimer. Mg(2+) serves as cofactor. Mn(2+) is required as a cofactor. Requires thiamine diphosphate as cofactor.

The catalysed reaction is isochorismate + 2-oxoglutarate + H(+) = 5-enolpyruvoyl-6-hydroxy-2-succinyl-cyclohex-3-ene-1-carboxylate + CO2. The protein operates within quinol/quinone metabolism; 1,4-dihydroxy-2-naphthoate biosynthesis; 1,4-dihydroxy-2-naphthoate from chorismate: step 2/7. It functions in the pathway quinol/quinone metabolism; menaquinone biosynthesis. Catalyzes the thiamine diphosphate-dependent decarboxylation of 2-oxoglutarate and the subsequent addition of the resulting succinic semialdehyde-thiamine pyrophosphate anion to isochorismate to yield 2-succinyl-5-enolpyruvyl-6-hydroxy-3-cyclohexene-1-carboxylate (SEPHCHC). The protein is 2-succinyl-5-enolpyruvyl-6-hydroxy-3-cyclohexene-1-carboxylate synthase of Escherichia coli O127:H6 (strain E2348/69 / EPEC).